Consider the following 230-residue polypeptide: MPDGGLIIAIDGPSGTGKSTTSRALATRLNAKYLDTGAMYRVATLHVLNQGIDPADTDAVITATAALPLAISDDPSSTEVLLAGVDVQTEIRGPEVTSHVSAVSAIPEVRDNLVNLQRALADRAHRCVVEGRDIGTVVLVDAPVKAYLTASPEVRAQRRYDQDTAAGRAADFDEVLAAVVKRDELDSTRAASPLKPAEDAHIIDTSAMTMDEVLTHLIQLTEASAERSNQ.

Position 12–20 (12–20) interacts with ATP; it reads GPSGTGKST.

The protein belongs to the cytidylate kinase family. Type 1 subfamily.

The protein localises to the cytoplasm. It catalyses the reaction CMP + ATP = CDP + ADP. The catalysed reaction is dCMP + ATP = dCDP + ADP. In Corynebacterium efficiens (strain DSM 44549 / YS-314 / AJ 12310 / JCM 11189 / NBRC 100395), this protein is Cytidylate kinase.